Reading from the N-terminus, the 251-residue chain is Imidazole glycerol phosphate synthase subunit HisF (251 aa).

Residues D11 and D130 contribute to the active site.

It belongs to the HisA/HisF family. Heterodimer of HisH and HisF.

Its subcellular location is the cytoplasm. The enzyme catalyses 5-[(5-phospho-1-deoxy-D-ribulos-1-ylimino)methylamino]-1-(5-phospho-beta-D-ribosyl)imidazole-4-carboxamide + L-glutamine = D-erythro-1-(imidazol-4-yl)glycerol 3-phosphate + 5-amino-1-(5-phospho-beta-D-ribosyl)imidazole-4-carboxamide + L-glutamate + H(+). Its pathway is amino-acid biosynthesis; L-histidine biosynthesis; L-histidine from 5-phospho-alpha-D-ribose 1-diphosphate: step 5/9. Its function is as follows. IGPS catalyzes the conversion of PRFAR and glutamine to IGP, AICAR and glutamate. The HisF subunit catalyzes the cyclization activity that produces IGP and AICAR from PRFAR using the ammonia provided by the HisH subunit. The sequence is that of Imidazole glycerol phosphate synthase subunit HisF from Listeria monocytogenes serotype 4b (strain CLIP80459).